Consider the following 249-residue polypeptide: Probable transcriptional regulatory protein GOX1679 (249 aa).

It belongs to the TACO1 family.

The protein resides in the cytoplasm. The protein is Probable transcriptional regulatory protein GOX1679 of Gluconobacter oxydans (strain 621H) (Gluconobacter suboxydans).